The sequence spans 56 residues: Large ribosomal subunit protein bL32 (56 aa).

Positions 1–35 (MAVQQNKSTRSKRGMRRSHHALRSVTISVDRTSGE) are disordered. Over residues 9–22 (TRSKRGMRRSHHAL) the composition is skewed to basic residues.

Belongs to the bacterial ribosomal protein bL32 family.

The chain is Large ribosomal subunit protein bL32 from Blochmanniella pennsylvanica (strain BPEN).